The chain runs to 337 residues: Phosphate acyltransferase (337 aa).

The protein belongs to the PlsX family. Homodimer. Probably interacts with PlsY.

It localises to the cytoplasm. The enzyme catalyses a fatty acyl-[ACP] + phosphate = an acyl phosphate + holo-[ACP]. Its pathway is lipid metabolism; phospholipid metabolism. Catalyzes the reversible formation of acyl-phosphate (acyl-PO(4)) from acyl-[acyl-carrier-protein] (acyl-ACP). This enzyme utilizes acyl-ACP as fatty acyl donor, but not acyl-CoA. The protein is Phosphate acyltransferase of Moritella marina (Vibrio marinus).